A 457-amino-acid chain; its full sequence is tRNA-2-methylthio-N(6)-dimethylallyladenosine synthase (457 aa).

In terms of domain architecture, MTTase N-terminal spans 19–134; it reads RKLFIETYGC…LPNLVGAVEH (116 aa). Positions 28, 64, 98, 172, 176, and 179 each coordinate [4Fe-4S] cluster. Residues 158–390 form the Radical SAM core domain; the sequence is PGVHISGFVS…IDLQNKLSEE (233 aa). Residues 393–456 enclose the TRAM domain; the sequence is LRDIGKTFEV…SATLFGEPVE (64 aa).

This sequence belongs to the methylthiotransferase family. MiaB subfamily. As to quaternary structure, monomer. [4Fe-4S] cluster serves as cofactor.

It localises to the cytoplasm. It carries out the reaction N(6)-dimethylallyladenosine(37) in tRNA + (sulfur carrier)-SH + AH2 + 2 S-adenosyl-L-methionine = 2-methylsulfanyl-N(6)-dimethylallyladenosine(37) in tRNA + (sulfur carrier)-H + 5'-deoxyadenosine + L-methionine + A + S-adenosyl-L-homocysteine + 2 H(+). In terms of biological role, catalyzes the methylthiolation of N6-(dimethylallyl)adenosine (i(6)A), leading to the formation of 2-methylthio-N6-(dimethylallyl)adenosine (ms(2)i(6)A) at position 37 in tRNAs that read codons beginning with uridine. This chain is tRNA-2-methylthio-N(6)-dimethylallyladenosine synthase, found in Parabacteroides distasonis (strain ATCC 8503 / DSM 20701 / CIP 104284 / JCM 5825 / NCTC 11152).